The sequence spans 119 residues: NAD(P)H-quinone oxidoreductase subunit M (119 aa).

It belongs to the complex I NdhM subunit family. In terms of assembly, NDH-1 can be composed of about 15 different subunits; different subcomplexes with different compositions have been identified which probably have different functions.

Its subcellular location is the cellular thylakoid membrane. It catalyses the reaction a plastoquinone + NADH + (n+1) H(+)(in) = a plastoquinol + NAD(+) + n H(+)(out). It carries out the reaction a plastoquinone + NADPH + (n+1) H(+)(in) = a plastoquinol + NADP(+) + n H(+)(out). NDH-1 shuttles electrons from an unknown electron donor, via FMN and iron-sulfur (Fe-S) centers, to quinones in the respiratory and/or the photosynthetic chain. The immediate electron acceptor for the enzyme in this species is believed to be plastoquinone. Couples the redox reaction to proton translocation, and thus conserves the redox energy in a proton gradient. Cyanobacterial NDH-1 also plays a role in inorganic carbon-concentration. In Picosynechococcus sp. (strain ATCC 27264 / PCC 7002 / PR-6) (Agmenellum quadruplicatum), this protein is NAD(P)H-quinone oxidoreductase subunit M.